The following is a 156-amino-acid chain: Small ribosomal subunit protein uS7 (156 aa).

It belongs to the universal ribosomal protein uS7 family. As to quaternary structure, part of the 30S ribosomal subunit. Contacts proteins S9 and S11.

Functionally, one of the primary rRNA binding proteins, it binds directly to 16S rRNA where it nucleates assembly of the head domain of the 30S subunit. Is located at the subunit interface close to the decoding center, probably blocks exit of the E-site tRNA. The chain is Small ribosomal subunit protein uS7 from Mycoplasmopsis synoviae (strain 53) (Mycoplasma synoviae).